Consider the following 952-residue polypeptide: MSDYKDTLNLPETGFPMRGNLANREPEMLKRWYDEDLYGEIRKAKKGKKSFVLHDGPPYANGDIHIGHALNKILKDIIIKSKTLSGFDAPYVPGWDCHGLPIELMVEKKKGKPGQKISAAEFREECRKYAAGQVEGQKESFKRLGVMGEWDKPYRTMDFGTEANIIRSLGKIADQGHLLKGFKPVHWCTDCGSALAEAEVEYQDKVSPSIDVRFVAADEAATLAKFSTPEGHQGEGELSVVIWTTTPWTLPANRAVALHADLEYVLVQVEAHGEQKAQRLILASELAKSVLDRANIEHYHNLGFAKGSDLELLQFNHPFYNFTVPAILGEHVTTDSGTGIVHTAPGHGQEDFVVGKKYDLEIANPVGSNGVYLPDTELFAGQHVFKANDSVLEVLKEKGALLHHHAYEHSYPHCWRHKTPIIFRATPQWFISMDQAGLRAKALEEVKSVEWMPEWGQNRIEGMIEGRPEWCISRQRTWGVPIALFVHKETAELHPDSLELIEKVAKLVEEKGIQAWWDVDAAELMGEEDAANYEKVLDTLDVWFDSGVTHFSVVDSREEYNFPEEERTHSADLYLEGSDQHRGWFQSSLISSVAMKGKAPYRQVLTHGFVVDGNGRKMSKSIGNVVAPKDVTNKLGADILRLWVASTDYTNEVAVSDEILKRSADAYRRIRNTARFFLANLSGFNPATDIVPAEEMVALDRWAVGRAFAAQQEIIKSYDEYNLHEVTQRLMHFCSIEMGSFYLDVIKDRQYTAKKGGHAQRSCQTALYYIVEALVRWMAPIMSFTADEIWNEMPGEREKFVFTGEWYQGLFDLAEGEEFNNEFWTEIQAVRASVNKLLEAARGEKVIGGALQAEVTLYADDALIAKINKLEDELRFVLLTSAATVKPLSEKTESAKATELDGLFVDVAASEAAKCERCWHHVADVGTIEGHEEVCGRCVSNVDGEGEERKFA.

The short motif at 58–68 (PYANGDIHIGH) is the 'HIGH' region element. Glu576 is an L-isoleucyl-5'-AMP binding site. Residues 617-621 (KMSKS) carry the 'KMSKS' region motif. Lys620 lines the ATP pocket. Zn(2+) is bound by residues Cys915, Cys918, Cys935, and Cys938.

This sequence belongs to the class-I aminoacyl-tRNA synthetase family. IleS type 1 subfamily. Monomer. It depends on Zn(2+) as a cofactor.

Its subcellular location is the cytoplasm. The catalysed reaction is tRNA(Ile) + L-isoleucine + ATP = L-isoleucyl-tRNA(Ile) + AMP + diphosphate. In terms of biological role, catalyzes the attachment of isoleucine to tRNA(Ile). As IleRS can inadvertently accommodate and process structurally similar amino acids such as valine, to avoid such errors it has two additional distinct tRNA(Ile)-dependent editing activities. One activity is designated as 'pretransfer' editing and involves the hydrolysis of activated Val-AMP. The other activity is designated 'posttransfer' editing and involves deacylation of mischarged Val-tRNA(Ile). In Aliivibrio fischeri (strain ATCC 700601 / ES114) (Vibrio fischeri), this protein is Isoleucine--tRNA ligase.